The sequence spans 275 residues: 2,3,4,5-tetrahydropyridine-2,6-dicarboxylate N-succinyltransferase (275 aa).

R108 and D145 together coordinate substrate.

The protein belongs to the transferase hexapeptide repeat family. Homotrimer.

It is found in the cytoplasm. The catalysed reaction is (S)-2,3,4,5-tetrahydrodipicolinate + succinyl-CoA + H2O = (S)-2-succinylamino-6-oxoheptanedioate + CoA. It participates in amino-acid biosynthesis; L-lysine biosynthesis via DAP pathway; LL-2,6-diaminopimelate from (S)-tetrahydrodipicolinate (succinylase route): step 1/3. This chain is 2,3,4,5-tetrahydropyridine-2,6-dicarboxylate N-succinyltransferase, found in Ruegeria pomeroyi (strain ATCC 700808 / DSM 15171 / DSS-3) (Silicibacter pomeroyi).